The following is a 778-amino-acid chain: Lon protease (778 aa).

A Lon N-terminal domain is found at 6–207 (LPLMALRDMV…TVISTLTSNI (202 aa)). 356 to 363 (GPPGVGKT) lines the ATP pocket. The 182-residue stretch at 592–773 (EDQIGSTTGL…DQVLKHALVE (182 aa)) folds into the Lon proteolytic domain. Active-site residues include S679 and K722.

Belongs to the peptidase S16 family. As to quaternary structure, homohexamer. Organized in a ring with a central cavity.

It is found in the cytoplasm. The enzyme catalyses Hydrolysis of proteins in presence of ATP.. In terms of biological role, ATP-dependent serine protease that mediates the selective degradation of mutant and abnormal proteins as well as certain short-lived regulatory proteins. Required for cellular homeostasis and for survival from DNA damage and developmental changes induced by stress. Degrades polypeptides processively to yield small peptide fragments that are 5 to 10 amino acids long. Binds to DNA in a double-stranded, site-specific manner. The sequence is that of Lon protease from Rickettsia felis (strain ATCC VR-1525 / URRWXCal2) (Rickettsia azadi).